Here is a 182-residue protein sequence, read N- to C-terminus: MFKYIGDIVKGTGTQLRSMVMVFGHGFRKRDTLQYPEEQVYLPPRYRGRIVLTRDPDGEERCVACNLCAVACPVGCISLQKAETEDGRWYPDFFRINFSRCIFCGLCEEACPTTAIQLTPDFEMADFKRQDLVYEKEDLLISGPGKNPDYNFYRVAGMAIGGKPKGAAQNEAEPINVKSLLP.

4Fe-4S ferredoxin-type domains are found at residues 52-82 and 92-121; these read LTRD…LQKA and DFFR…LTPD. Residues C62, C65, C68, C72, C101, C104, C107, and C111 each coordinate [4Fe-4S] cluster.

Belongs to the complex I 23 kDa subunit family. NDH-1 is composed of 13 different subunits. Subunits NuoA, H, J, K, L, M, N constitute the membrane sector of the complex. Requires [4Fe-4S] cluster as cofactor.

It is found in the cell inner membrane. The enzyme catalyses a quinone + NADH + 5 H(+)(in) = a quinol + NAD(+) + 4 H(+)(out). Functionally, NDH-1 shuttles electrons from NADH, via FMN and iron-sulfur (Fe-S) centers, to quinones in the respiratory chain. The immediate electron acceptor for the enzyme in this species is believed to be ubiquinone. Couples the redox reaction to proton translocation (for every two electrons transferred, four hydrogen ions are translocated across the cytoplasmic membrane), and thus conserves the redox energy in a proton gradient. This chain is NADH-quinone oxidoreductase subunit I, found in Pseudomonas syringae pv. tomato (strain ATCC BAA-871 / DC3000).